The primary structure comprises 73 residues: Small ribosomal subunit protein bS18 (73 aa).

This sequence belongs to the bacterial ribosomal protein bS18 family. In terms of assembly, part of the 30S ribosomal subunit. Forms a tight heterodimer with protein bS6.

Binds as a heterodimer with protein bS6 to the central domain of the 16S rRNA, where it helps stabilize the platform of the 30S subunit. The chain is Small ribosomal subunit protein bS18 from Prochlorococcus marinus (strain SARG / CCMP1375 / SS120).